We begin with the raw amino-acid sequence, 184 residues long: MSEDKIGWHGTTILSVRRNGRVVIAGDGQVSMGNTVMKPNARKVRRLGDGSVIGGFAGATADAFTLFERLEAKLERHNGQLLRAAVELAKDWRTDKYLRNLEALMIVADDQVTLVLTGNGDVLEPVGGIAAIGSGGNFALSAARALVDYEEDAEVIARKALAVAADICVFTNDQVTIETLESRV.

Thr11 is an active-site residue. Residues Ala165, Cys168, and Thr171 each coordinate Na(+).

It belongs to the peptidase T1B family. HslV subfamily. In terms of assembly, a double ring-shaped homohexamer of HslV is capped on each side by a ring-shaped HslU homohexamer. The assembly of the HslU/HslV complex is dependent on binding of ATP.

It is found in the cytoplasm. It catalyses the reaction ATP-dependent cleavage of peptide bonds with broad specificity.. Its activity is regulated as follows. Allosterically activated by HslU binding. Protease subunit of a proteasome-like degradation complex believed to be a general protein degrading machinery. The sequence is that of ATP-dependent protease subunit HslV from Zymomonas mobilis subsp. mobilis (strain ATCC 31821 / ZM4 / CP4).